Reading from the N-terminus, the 621-residue chain is Chaperone protein DnaK (621 aa).

Thr-202 bears the Phosphothreonine; by autocatalysis mark. The disordered stretch occupies residues 596–621 (SQFAQAAKQNEEKKEEDKKDSEESKN). Over residues 604–621 (QNEEKKEEDKKDSEESKN) the composition is skewed to basic and acidic residues.

The protein belongs to the heat shock protein 70 family.

Acts as a chaperone. In Malacoplasma penetrans (strain HF-2) (Mycoplasma penetrans), this protein is Chaperone protein DnaK.